The chain runs to 363 residues: Sorting nexin-21 (363 aa).

A compositionally biased stretch (basic residues) spans 1-11 (MASRLLHRLRH). The disordered stretch occupies residues 1-99 (MASRLLHRLR…PPPDGQRSSQ (99 aa)). Residues 12-28 (ALASDGPGEAAAGPEAE) are compositionally biased toward low complexity. Over residues 46–56 (SRLSGTLSFTS) the composition is skewed to polar residues. Residues 57-71 (AEDDPDDEDEDDEAG) are compositionally biased toward acidic residues. The PX domain maps to 119-236 (QRLLFEVTSA…DFFVLPELRR (118 aa)). Arg-161, Ser-163, Lys-188, and Arg-202 together coordinate a 1,2-diacyl-sn-glycero-3-phospho-(1D-myo-inositol-3-phosphate).

It belongs to the sorting nexin family. As to quaternary structure, monomer.

It localises to the cytoplasmic vesicle membrane. The protein resides in the early endosome membrane. Functionally, binds to membranes enriched in phosphatidylinositol 3-phosphate (PtdIns(P3)) and phosphatidylinositol 4,5-bisphosphate. May be involved in several stages of intracellular trafficking. The polypeptide is Sorting nexin-21 (Mus musculus (Mouse)).